A 527-amino-acid chain; its full sequence is Peptide chain release factor 3 (527 aa).

In terms of domain architecture, tr-type G spans 10–278 (DKRRTFAIIS…AFIEYAPAPL (269 aa)). GTP is bound by residues 19–26 (SHPDAGKT), 87–91 (DTPGH), and 141–144 (NKLD).

This sequence belongs to the TRAFAC class translation factor GTPase superfamily. Classic translation factor GTPase family. PrfC subfamily.

Its subcellular location is the cytoplasm. In terms of biological role, increases the formation of ribosomal termination complexes and stimulates activities of RF-1 and RF-2. It binds guanine nucleotides and has strong preference for UGA stop codons. It may interact directly with the ribosome. The stimulation of RF-1 and RF-2 is significantly reduced by GTP and GDP, but not by GMP. In Pelobacter propionicus (strain DSM 2379 / NBRC 103807 / OttBd1), this protein is Peptide chain release factor 3.